The following is a 107-amino-acid chain: MANEVQVQLSPLKGGHPPAVKAGGKRISKKQEIGILERHTKKTGLEKTSATANVAKIQTMDALNDTLEKLSHKFPAVAHMAHQKPRPALEKVTPLKRIYIIQQPRKC.

The interval 1 to 26 is disordered; sequence MANEVQVQLSPLKGGHPPAVKAGGKR.

In terms of tissue distribution, detected in the corneal epithelium, and only in trace amounts in the liver, bladder, brain, heart, and stomach.

May play a role in the early stages of epithelial differentiation or in apoptosis. The sequence is that of Death-associated protein-like 1 (DAPL1) from Bos taurus (Bovine).